The following is a 453-amino-acid chain: Flavonol-3-O-rhamnosyltransferase (453 aa).

His24 acts as the Proton acceptor in catalysis. Residue His24 participates in an anthocyanidin binding. Asp119 (charge relay) is an active-site residue. Residue His150 participates in an anthocyanidin binding. UDP-beta-L-rhamnose contacts are provided by Thr280, Ala333, His350, Asn354, Ser355, and Glu358. Position 373 (Ala373) interacts with an anthocyanidin.

This sequence belongs to the UDP-glycosyltransferase family. Expressed in leaves, flowers, siliques, and stems. Expressed in the shoot apex.

It catalyses the reaction kaempferol + UDP-beta-L-rhamnose = kaempferol 3-O-alpha-L-rhamnoside + UDP + H(+). The enzyme catalyses UDP-beta-L-rhamnose + quercetin = quercitrin + UDP + H(+). It functions in the pathway flavonoid metabolism. Functionally, flavonol 3-O-rhamnosyltransferase that catalyzes the transfer of rhamnose from UDP-rhamnose to the 3-OH position of kaempferol and quercetin. Possesses low quercetin 3-O-glucosyltransferase activity in vitro. This chain is Flavonol-3-O-rhamnosyltransferase, found in Arabidopsis thaliana (Mouse-ear cress).